The primary structure comprises 222 residues: Flagellar L-ring protein (222 aa).

An N-terminal signal peptide occupies residues 1–18 (MKTTRAIAMLGLLLGLAA). The N-palmitoyl cysteine moiety is linked to residue Cys19. Cys19 carries S-diacylglycerol cysteine lipidation.

Belongs to the FlgH family. The basal body constitutes a major portion of the flagellar organelle and consists of four rings (L,P,S, and M) mounted on a central rod.

The protein resides in the cell outer membrane. It is found in the bacterial flagellum basal body. In terms of biological role, assembles around the rod to form the L-ring and probably protects the motor/basal body from shearing forces during rotation. This is Flagellar L-ring protein from Thiobacillus denitrificans (strain ATCC 25259 / T1).